We begin with the raw amino-acid sequence, 709 residues long: Polyribonucleotide nucleotidyltransferase (709 aa).

The Mg(2+) site is built by Asp-489 and Asp-495. One can recognise a KH domain in the interval 556–615; sequence PKIDMIKIDVDKIKVVIGKGGETIDKIIAETGVKIDIDEEGNVSIFSSDQAAIDRTKDII. Residues 625–693 enclose the S1 motif domain; that stretch reads GEVYHAKVVR…DKGRVDASMK (69 aa).

The protein belongs to the polyribonucleotide nucleotidyltransferase family. It depends on Mg(2+) as a cofactor.

Its subcellular location is the cytoplasm. The enzyme catalyses RNA(n+1) + phosphate = RNA(n) + a ribonucleoside 5'-diphosphate. Functionally, involved in mRNA degradation. Catalyzes the phosphorolysis of single-stranded polyribonucleotides processively in the 3'- to 5'-direction. The polypeptide is Polyribonucleotide nucleotidyltransferase (Streptococcus agalactiae serotype Ia (strain ATCC 27591 / A909 / CDC SS700)).